The chain runs to 262 residues: Capsid protein (262 aa).

The interval 183-262 (APTIEAITRP…SHHRSPSPRK (80 aa)) is disordered. Positions 215-233 (RRRKVKTTVVYGRRRSKSR) match the Bipartite nuclear localization signal motif. 2 stretches are compositionally biased toward basic residues: residues 215-234 (RRRKVKTTVVYGRRRSKSRE) and 252-262 (SSHHRSPSPRK).

It belongs to the avihepadnavirus core antigen family. In terms of assembly, homodimerizes, then multimerizes.

The protein localises to the virion. It is found in the host cytoplasm. Its function is as follows. Self assembles to form an icosahedral capsid. Most capsid appear to be large particles with an icosahedral symmetry of T=4 and consist of 240 copies of capsid protein, though a fraction forms smaller T=3 particles consisting of 180 capsid proteins. Entering capsid are transported along microtubules to the nucleus. Phosphorylation of the capsid is thought to induce exposure of nuclear localization signal in the C-terminal portion of the capsid protein that allows binding to the nuclear pore complex via the importin (karyopherin-) alpha and beta. Capsids are imported in intact form through the nuclear pore into the nuclear basket, where it probably binds NUP153. Only capsids that contain the mature viral genome can release the viral DNA and capsid protein into the nucleoplasm. Immature capsids get stucked in the basket. Capsids encapsulate the pre-genomic RNA and the P protein. Pre-genomic RNA is reverse transcribed into DNA while the capsid is still in the cytoplasm. The capsid can then either be directed to the nucleus, providing more genome for transcription, or bud through the endoplasmic reticulum to provide new virions. The chain is Capsid protein (C) from Duck hepatitis B virus (isolate Shanghai/DHBVQCA34) (DHBV).